Here is a 572-residue protein sequence, read N- to C-terminus: Receptor-type adenylate cyclase GRESAG 4.2 (572 aa).

Residues 1 to 225 (RKTLLTFGLN…PNGNALTPAQ (225 aa)) lie on the Extracellular side of the membrane. N-linked (GlcNAc...) asparagine glycans are attached at residues Asn-10, Asn-77, and Asn-152. The chain crosses the membrane as a helical span at residues 226–251 (LDWCGWCRFACADTGSRLTVFLCCIM). Residues 252-572 (RNKRDNDNAP…TVRRLSVALQ (321 aa)) lie on the Cytoplasmic side of the membrane. Residues 269–424 (TLIFTDIESS…QTANTAARTE (156 aa)) form the Guanylate cyclase domain. Asp-274 and Asp-317 together coordinate Mg(2+).

This sequence belongs to the adenylyl cyclase class-3 family. It depends on Mg(2+) as a cofactor.

Its subcellular location is the cell membrane. It catalyses the reaction ATP = 3',5'-cyclic AMP + diphosphate. Functionally, could act as a receptor for an unknown ligand. The chain is Receptor-type adenylate cyclase GRESAG 4.2 (GRESAG 4.2) from Trypanosoma brucei brucei.